We begin with the raw amino-acid sequence, 137 residues long: Large ribosomal subunit protein uL16c (137 aa).

It belongs to the universal ribosomal protein uL16 family. Part of the 50S ribosomal subunit.

The protein resides in the plastid. This chain is Large ribosomal subunit protein uL16c, found in Aneura mirabilis (Parasitic liverwort).